Reading from the N-terminus, the 433-residue chain is Dihydrolipoyllysine-residue acetyltransferase component of pyruvate dehydrogenase complex (433 aa).

Residues 2–77 (AFEFRLPDIG…VVGDVIVKID (76 aa)) enclose the Lipoyl-binding domain. N6-lipoyllysine is present on Lys-43. Disordered regions lie at residues 80-134 (DAEE…PSVR) and 164-204 (YLNG…FPET). Composition is skewed to basic and acidic residues over residues 84–103 (MQFK…KEQE) and 117–126 (EKTEVDESKT). A Peripheral subunit-binding (PSBD) domain is found at 128–165 (KAMPSVRKYARENGVNIKAVNGSGKNGRITKEDIDAYL). Low complexity predominate over residues 166 to 188 (NGGSSEEGSNTSVASESTSSDVV). His-404 is an active-site residue.

The protein belongs to the 2-oxoacid dehydrogenase family. Forms a 24-polypeptide structural core with octahedral symmetry. Requires (R)-lipoate as cofactor.

The enzyme catalyses N(6)-[(R)-dihydrolipoyl]-L-lysyl-[protein] + acetyl-CoA = N(6)-[(R)-S(8)-acetyldihydrolipoyl]-L-lysyl-[protein] + CoA. In terms of biological role, the pyruvate dehydrogenase complex catalyzes the overall conversion of pyruvate to acetyl-CoA and CO(2). It contains multiple copies of three enzymatic components: pyruvate dehydrogenase (E1), dihydrolipoamide acetyltransferase (E2) and lipoamide dehydrogenase (E3). The sequence is that of Dihydrolipoyllysine-residue acetyltransferase component of pyruvate dehydrogenase complex (pdhC) from Staphylococcus epidermidis (strain ATCC 12228 / FDA PCI 1200).